The sequence spans 512 residues: Activin receptor type-2B (512 aa).

The first 18 residues, 1 to 18 (MTAPWVALALLWGSLCAG), serve as a signal peptide directing secretion. Residues 19–137 (SGRGEAETRE…PPPTAPTLLT (119 aa)) are Extracellular-facing. Disulfide bonds link Cys-29-Cys-59, Cys-49-Cys-77, Cys-84-Cys-103, Cys-90-Cys-102, and Cys-104-Cys-109. Residues Asn-42 and Asn-65 are each glycosylated (N-linked (GlcNAc...) asparagine). A helical membrane pass occupies residues 138–158 (VLAYSLLPIGGLSLIVLLAFW). Residues 159 to 512 (MYRHRKPPYG…VDLPPKESSI (354 aa)) lie on the Cytoplasmic side of the membrane. A Protein kinase domain is found at 190 to 480 (LQLLEIKARG…AGCVEERVSL (291 aa)). ATP contacts are provided by residues 196–204 (KARGRFGCV) and Lys-217. Asp-321 serves as the catalytic Proton acceptor. The segment at 491-512 (DCLVSLVTSVTNVDLPPKESSI) is interaction with DYNLT1.

Belongs to the protein kinase superfamily. TKL Ser/Thr protein kinase family. TGFB receptor subfamily. As to quaternary structure, forms an activin receptor complex with activin type II receptors such as ACVR1B. Interacts with VPS39. Interacts with DYNLT1. Interacts with BMP3. Interacts with BMP2. Interacts with BMP6. The cofactor is Mg(2+). Requires Mn(2+) as cofactor. Post-translationally, phosphorylated. Constitutive phosphorylation is in part catalyzed by its own kinase activity.

It is found in the cell membrane. It carries out the reaction L-threonyl-[receptor-protein] + ATP = O-phospho-L-threonyl-[receptor-protein] + ADP + H(+). The enzyme catalyses L-seryl-[receptor-protein] + ATP = O-phospho-L-seryl-[receptor-protein] + ADP + H(+). In terms of biological role, transmembrane serine/threonine kinase activin type-2 receptor forming an activin receptor complex with activin type-1 serine/threonine kinase receptors (ACVR1, ACVR1B or ACVR1c). Transduces the activin signal from the cell surface to the cytoplasm and is thus regulating many physiological and pathological processes including neuronal differentiation and neuronal survival, hair follicle development and cycling, FSH production by the pituitary gland, wound healing, extracellular matrix production, immunosuppression and carcinogenesis. Activin is also thought to have a paracrine or autocrine role in follicular development in the ovary. Within the receptor complex, the type-2 receptors act as a primary activin receptors (binds activin-A/INHBA, activin-B/INHBB as well as inhibin-A/INHA-INHBA). The type-1 receptors like ACVR1B act as downstream transducers of activin signals. Activin binds to type-2 receptor at the plasma membrane and activates its serine-threonine kinase. The activated receptor type-2 then phosphorylates and activates the type-1 receptor. Once activated, the type-1 receptor binds and phosphorylates the SMAD proteins SMAD2 and SMAD3, on serine residues of the C-terminal tail. Soon after their association with the activin receptor and subsequent phosphorylation, SMAD2 and SMAD3 are released into the cytoplasm where they interact with the common partner SMAD4. This SMAD complex translocates into the nucleus where it mediates activin-induced transcription. Inhibitory SMAD7, which is recruited to ACVR1B through FKBP1A, can prevent the association of SMAD2 and SMAD3 with the activin receptor complex, thereby blocking the activin signal. Activin signal transduction is also antagonized by the binding to the receptor of inhibin-B via the IGSF1 inhibin coreceptor. This is Activin receptor type-2B (ACVR2B) from Homo sapiens (Human).